The sequence spans 252 residues: 2-succinyl-6-hydroxy-2,4-cyclohexadiene-1-carboxylate synthase (252 aa).

Belongs to the AB hydrolase superfamily. MenH family. As to quaternary structure, monomer.

It catalyses the reaction 5-enolpyruvoyl-6-hydroxy-2-succinyl-cyclohex-3-ene-1-carboxylate = (1R,6R)-6-hydroxy-2-succinyl-cyclohexa-2,4-diene-1-carboxylate + pyruvate. The protein operates within quinol/quinone metabolism; 1,4-dihydroxy-2-naphthoate biosynthesis; 1,4-dihydroxy-2-naphthoate from chorismate: step 3/7. Its pathway is quinol/quinone metabolism; menaquinone biosynthesis. Functionally, catalyzes a proton abstraction reaction that results in 2,5-elimination of pyruvate from 2-succinyl-5-enolpyruvyl-6-hydroxy-3-cyclohexene-1-carboxylate (SEPHCHC) and the formation of 2-succinyl-6-hydroxy-2,4-cyclohexadiene-1-carboxylate (SHCHC). The sequence is that of 2-succinyl-6-hydroxy-2,4-cyclohexadiene-1-carboxylate synthase from Salmonella schwarzengrund (strain CVM19633).